Here is a 353-residue protein sequence, read N- to C-terminus: Quinolinate synthase (353 aa).

2 residues coordinate iminosuccinate: histidine 47 and serine 68. Cysteine 113 contacts [4Fe-4S] cluster. Iminosuccinate is bound by residues 139 to 141 (YAN) and serine 156. Cysteine 200 is a binding site for [4Fe-4S] cluster. Iminosuccinate contacts are provided by residues 226–228 (HPE) and threonine 243. [4Fe-4S] cluster is bound at residue cysteine 297.

Belongs to the quinolinate synthase family. Type 1 subfamily. It depends on [4Fe-4S] cluster as a cofactor.

Its subcellular location is the cytoplasm. It carries out the reaction iminosuccinate + dihydroxyacetone phosphate = quinolinate + phosphate + 2 H2O + H(+). The protein operates within cofactor biosynthesis; NAD(+) biosynthesis; quinolinate from iminoaspartate: step 1/1. Catalyzes the condensation of iminoaspartate with dihydroxyacetone phosphate to form quinolinate. This Vibrio campbellii (strain ATCC BAA-1116) protein is Quinolinate synthase.